A 395-amino-acid chain; its full sequence is Argininosuccinate synthase (395 aa).

8–16 is an ATP binding site; sequence AYSGGLDTS. The L-citrulline site is built by Y86 and S91. G116 contributes to the ATP binding site. Positions 118, 122, and 123 each coordinate L-aspartate. L-citrulline is bound at residue N122. L-citrulline-binding residues include R126, S172, S181, E257, and Y269.

The protein belongs to the argininosuccinate synthase family. Type 1 subfamily. In terms of assembly, homotetramer.

The protein localises to the cytoplasm. The enzyme catalyses L-citrulline + L-aspartate + ATP = 2-(N(omega)-L-arginino)succinate + AMP + diphosphate + H(+). It participates in amino-acid biosynthesis; L-arginine biosynthesis; L-arginine from L-ornithine and carbamoyl phosphate: step 2/3. This chain is Argininosuccinate synthase, found in Methanosarcina barkeri (strain Fusaro / DSM 804).